The chain runs to 214 residues: Protein-L-isoaspartate O-methyltransferase 1 (214 aa).

Ser62 is a catalytic residue.

Belongs to the methyltransferase superfamily. L-isoaspartyl/D-aspartyl protein methyltransferase family.

Its subcellular location is the cytoplasm. It catalyses the reaction [protein]-L-isoaspartate + S-adenosyl-L-methionine = [protein]-L-isoaspartate alpha-methyl ester + S-adenosyl-L-homocysteine. Functionally, catalyzes the methyl esterification of L-isoaspartyl residues in peptides and proteins that result from spontaneous decomposition of normal L-aspartyl and L-asparaginyl residues. It plays a role in the repair and/or degradation of damaged proteins. The chain is Protein-L-isoaspartate O-methyltransferase 1 from Syntrophobacter fumaroxidans (strain DSM 10017 / MPOB).